Consider the following 627-residue polypeptide: Plastin-3 (627 aa).

EF-hand domains follow at residues 8–43 and 48–83; these read EELEELREAFGKVDLNGNGFICDHELHDLFKEANLP and KVREIIQKLMEEGDKNKDNMISFDEFVSIFQELKSG. The Ca(2+) site is built by Asp21, Asn23, Asn25, Glu32, Asp61, Asn63, Asp65, Met67, and Glu72. Actin-binding regions lie at residues 105 to 378 and 379 to 624; these read TSEL…ALTK and PENQ…GRGM. 4 Calponin-homology (CH) domains span residues 119-235, 263-374, 393-503, and 515-624; these read EEER…KIGL, LSPE…NKYP, TREE…RRYT, and KVND…GRGM.

It localises to the cytoplasm. Actin-bundling protein. The chain is Plastin-3 (pls3) from Danio rerio (Zebrafish).